We begin with the raw amino-acid sequence, 314 residues long: Probable 2-(5''-triphosphoribosyl)-3'-dephosphocoenzyme-A synthase (314 aa).

This sequence belongs to the CitG/MdcB family.

The enzyme catalyses 3'-dephospho-CoA + ATP = 2'-(5''-triphospho-alpha-D-ribosyl)-3'-dephospho-CoA + adenine. This is Probable 2-(5''-triphosphoribosyl)-3'-dephosphocoenzyme-A synthase from Photobacterium profundum (strain SS9).